The primary structure comprises 105 residues: Ferredoxin--nitrite reductase, chloroplastic (105 aa).

Residues Cys28 and Cys32 each coordinate [4Fe-4S] cluster. A siroheme-binding site is contributed by Cys32.

This sequence belongs to the nitrite and sulfite reductase 4Fe-4S domain family. As to quaternary structure, monomer. Requires siroheme as cofactor. It depends on [4Fe-4S] cluster as a cofactor. In terms of tissue distribution, highest expression in roots and hypocotyls. Some expression in cotyledonary whorls.

The protein resides in the plastid. It is found in the chloroplast. It carries out the reaction 6 oxidized [2Fe-2S]-[ferredoxin] + NH4(+) + 2 H2O = nitrite + 6 reduced [2Fe-2S]-[ferredoxin] + 8 H(+). It participates in nitrogen metabolism; nitrate reduction (assimilation). In Pinus sylvestris (Scotch pine), this protein is Ferredoxin--nitrite reductase, chloroplastic (NIR).